The sequence spans 735 residues: Trafficking protein particle complex subunit 12 (735 aa).

Disordered stretches follow at residues 1–204 (MEDA…QPSP) and 237–276 (NPGAGSPAPASPPPLAVPGTEGRPEPVAMRGPQAAAPPAS). Pro residues predominate over residues 13-22 (PEAPHPPQLA). Positions 34–50 (ETIDLGGDEFGSEENET) are enriched in acidic residues. S109 and S184 each carry phosphoserine. 4 TPR repeats span residues 545–578 (GRVMYSMANCLLLMKDYVLAVEAYHSVIKYYPEQ), 580–613 (PQLLSGIGRISLQIGDIKTAEKYFQDVEKVTQKL), 620–653 (IMVLMNSAFLHLGQNNFAEAHRFFTEILRMDPRN), and 654–687 (AVANNNAAVCLLYLGKLKDSLRQLEAMVQQDPRH).

In terms of assembly, component of the multisubunit TRAPP (transport protein particle) complex, which includes at least TRAPPC2, TRAPPC2L, TRAPPC3, TRAPPC3L, TRAPPC4, TRAPPC5, TRAPPC8, TRAPPC9, TRAPPC10, TRAPPC11 and TRAPPC12. Interacts with CENPE. In terms of processing, phosphorylated as the cells enter mitosis but is dephosphorylated at or before the onset of anaphase. The phosphorylated form recruits CENPE to kinetochores more efficiently than the non-phosphorylated form.

It is found in the endoplasmic reticulum-Golgi intermediate compartment. It localises to the nucleus. Functionally, component of the TRAPP complex, which is involved in endoplasmic reticulum to Golgi apparatus trafficking at a very early stage. Also plays a role in chromosome congression, kinetochore assembly and stability and controls the recruitment of CENPE to the kinetochores. The polypeptide is Trafficking protein particle complex subunit 12 (Homo sapiens (Human)).